The chain runs to 111 residues: uncharacterized protein (111 aa).

This is an uncharacterized protein from Bacillus subtilis (strain 168).